The sequence spans 531 residues: Histone-arginine methyltransferase CARMER (531 aa).

An SAM-dependent MTase PRMT-type domain is found at 141-450 (ASQYFQFYGY…QSYDVTIDLH (310 aa)). Positions 154, 163, 187, 209, 238, and 266 each coordinate S-adenosyl-L-methionine. Arginine 501 carries the asymmetric dimethylarginine; by autocatalysis modification.

This sequence belongs to the class I-like SAM-binding methyltransferase superfamily. Protein arginine N-methyltransferase family. In terms of assembly, homodimer. Post-translationally, the dimethylated protein is the major form.

The protein resides in the cytoplasm. It is found in the nucleus. The catalysed reaction is L-arginyl-[protein] + 2 S-adenosyl-L-methionine = N(omega),N(omega)-dimethyl-L-arginyl-[protein] + 2 S-adenosyl-L-homocysteine + 2 H(+). Methylates (mono- and asymmetric dimethylation) the guanidino nitrogens of arginyl residues in proteins. May methylate histone H3 at 'Arg-17' and activate transcription via chromatin remodeling. This is Histone-arginine methyltransferase CARMER (Art4) from Drosophila ananassae (Fruit fly).